The sequence spans 462 residues: Tryptophan dimethylallyltransferase ifgA (462 aa).

L-tryptophan contacts are provided by residues 83-84 (IL) and glutamate 92. Arginine 103, lysine 189, and tyrosine 191 together coordinate substrate. L-tryptophan contacts are provided by tyrosine 193 and arginine 246. Substrate contacts are provided by arginine 259, lysine 261, tyrosine 263, glutamine 345, and tyrosine 347.

It belongs to the tryptophan dimethylallyltransferase family. Homodimer.

The enzyme catalyses L-tryptophan + dimethylallyl diphosphate = 4-(3-methylbut-2-enyl)-L-tryptophan + diphosphate. The protein operates within alkaloid biosynthesis; ergot alkaloid biosynthesis. Functionally, tryptophan dimethylallyltransferase; part of the gene cluster that mediates the biosynthesis of isofumigaclavines, fungal ergot alkaloids. The tryptophan dimethylallyltransferase ifgA catalyzes the first step of ergot alkaloid biosynthesis by condensing dimethylallyl diphosphate (DMAP) and tryptophan to form 4-dimethylallyl-L-tryptophan. The second step is catalyzed by the methyltransferase ifgB that methylates 4-dimethylallyl-L-tryptophan in the presence of S-adenosyl-L-methionine, resulting in the formation of N-methyl-dimethylallyl-L-tryptophan. The catalase ifgD and the FAD-dependent oxidoreductase ifgC then transform N-methyl-dimethylallyl-L-tryptophan to chanoclavine-I which is further oxidized by ifgE in the presence of NAD(+), resulting in the formation of chanoclavine-I aldehyde. The chanoclavine-I aldehyde reductases ifgG and/or fgaOx3 reduce chanoclavine-I aldehyde to dihydrochanoclavine-I aldehyde that spontaneously dehydrates to form 6,8-dimethyl-6,7-didehydroergoline. The festuclavine dehydrogenases ifgF1 and/or ifgF2 then catalyze the reduction of 6,8-dimethyl-6,7-didehydroergoline to form festuclavine. Hydrolysis of festuclavine by a yet undetermined cytochrome P450 monooxygenase (called ifgH) then leads to the formation of isofumigaclavine B which is in turn acetylated by ifgI to isofumigaclavine A. Penicillium roqueforti has interestingly at least two sets of genes for the consumption of chanoclavine-I aldehyde on three different loci, the OYEs ifgG/fgaOx3 and the festuclavine synthase homologs ifgF1/ifgF2. The reason for the duplication of these genes is unclear, probably to ensure the conversion of chanoclavine-I aldehyde by differential gene expression under various environmental conditions. The polypeptide is Tryptophan dimethylallyltransferase ifgA (Penicillium roqueforti (strain FM164)).